The following is a 474-amino-acid chain: Glutathione synthetase (474 aa).

Ala-2 bears the N-acetylalanine mark. A substrate-binding site is contributed by Arg-125. An ATP-binding site is contributed by Glu-144. The Mg(2+) site is built by Glu-144 and Asn-146. Substrate contacts are provided by residues 148–151, 214–216, Gln-220, and 267–270; these read ISAS, ERN, and RDGY. Residues Lys-305, 364 to 373, Tyr-375, and 398 to 401 each bind ATP; these read KPQREGGGNN and MEKI. Position 368 (Glu-368) interacts with Mg(2+). Residue Ser-415 is modified to Phosphoserine. Glu-425 is a binding site for ATP. Arg-450 contributes to the substrate binding site. ATP-binding residues include Lys-452 and Asp-458. A substrate-binding site is contributed by 461-462; the sequence is VA.

Belongs to the eukaryotic GSH synthase family. In terms of assembly, homodimer. The cofactor is Mg(2+).

It catalyses the reaction gamma-L-glutamyl-L-cysteine + glycine + ATP = glutathione + ADP + phosphate + H(+). The catalysed reaction is gamma-L-glutamyl-(2S)-2-aminobutanoate + glycine + ATP = ophthalmate + ADP + phosphate + H(+). Its pathway is sulfur metabolism; glutathione biosynthesis; glutathione from L-cysteine and L-glutamate: step 2/2. Functionally, catalyzes the production of glutathione from gamma-glutamylcysteine and glycine in an ATP-dependent manner. Glutathione (gamma-glutamylcysteinylglycine, GSH) is the most abundant intracellular thiol in living aerobic cells and is required for numerous processes including the protection of cells against oxidative damage, amino acid transport, the detoxification of foreign compounds, the maintenance of protein sulfhydryl groups in a reduced state and acts as a cofactor for a number of enzymes. Participates in ophthalmate biosynthesis in hepatocytes. The protein is Glutathione synthetase of Rattus norvegicus (Rat).